The sequence spans 357 residues: UDP-N-acetylglucosamine 2-epimerase homolog (357 aa).

It belongs to the UDP-N-acetylglucosamine 2-epimerase family.

In Methanococcus maripaludis (strain DSM 14266 / JCM 13030 / NBRC 101832 / S2 / LL), this protein is UDP-N-acetylglucosamine 2-epimerase homolog.